A 122-amino-acid chain; its full sequence is MIQSQTYLNIVDNSGARKIMCIRVVGASYQRYAHIGNVIIAVIKEAVPNTKMEESEIVRAVIIRTSKEFQRDDGMRIRSDDNAAIIIDQKGNPKGTRVFGPVLQELRQYNFTKIISLAPEVL.

It belongs to the universal ribosomal protein uL14 family. As to quaternary structure, part of the 50S ribosomal subunit.

It localises to the plastid. The protein localises to the chloroplast. Binds to 23S rRNA. The sequence is that of Large ribosomal subunit protein uL14c from Welwitschia mirabilis (Tree tumbo).